The chain runs to 497 residues: Hexokinase-1 (497 aa).

The chain crosses the membrane as a helical span at residues 4-24 (ATVGAAVIGAATVCAVAALIV). The region spanning 35 to 487 (ARAMAILREF…SGIGAALLAA (453 aa)) is the Hexokinase domain. Residues 90-228 (TGDEAGVFYA…GVDMRVSALV (139 aa)) form a hexokinase small subdomain region. G104, T105, and N106 together coordinate ADP. D-glucose contacts are provided by T194, K195, N229, and D230. A hexokinase large subdomain region spans residues 229–476 (NDTVGTLAGG…TSIVFEHSND (248 aa)). An ADP-binding site is contributed by T253. D-glucose contacts are provided by N256, E284, and E315. Position 441 (G441) interacts with ADP.

It belongs to the hexokinase family.

It localises to the plastid. Its subcellular location is the chloroplast outer membrane. It catalyses the reaction a D-hexose + ATP = a D-hexose 6-phosphate + ADP + H(+). The catalysed reaction is D-fructose + ATP = D-fructose 6-phosphate + ADP + H(+). The enzyme catalyses D-glucose + ATP = D-glucose 6-phosphate + ADP + H(+). It functions in the pathway carbohydrate metabolism; hexose metabolism. The protein operates within carbohydrate degradation; glycolysis; D-glyceraldehyde 3-phosphate and glycerone phosphate from D-glucose: step 1/4. Functionally, fructose and glucose phosphorylating enzyme. This is Hexokinase-1 (HXK1) from Nicotiana tabacum (Common tobacco).